The chain runs to 660 residues: CXXC-type zinc finger protein 1 (660 aa).

An N-acetylmethionine modification is found at Met-1. Residues 1–14 (MEGDGSDLEPPDAG) show a composition bias toward acidic residues. The tract at residues 1 to 20 (MEGDGSDLEPPDAGDDSKSE) is disordered. Phosphoserine is present on residues Ser-6 and Ser-19. The PHD-type zinc-finger motif lies at 28-76 (YCICRKPDINCFMIGCDNCNEWFHGDCIRITEKMAKAIREWYCRECREK). Basic and acidic residues predominate over residues 91-120 (ERDGSERAGSEPRDEGGGRKRPASDPELQR). The interval 91 to 166 (ERDGSERAGS…QQQQQQQQQI (76 aa)) is disordered. Ser-124 carries the phosphoserine modification. The CXXC-type zinc-finger motif lies at 164–213 (QQIKRSARMCGECEACRRTEDCGHCDFCRDMKKFGGPNKIRQKCRLRQCQ). Cys-173, Cys-176, Cys-179, Cys-185, Cys-188, Cys-191, Cys-207, and Cys-212 together coordinate Zn(2+). 2 disordered regions span residues 223-287 (FPSS…SDED) and 328-375 (AVKV…DPAS). Ser-228 carries the phosphoserine modification. Position 231 is a phosphothreonine (Thr-231). A Glycyl lysine isopeptide (Lys-Gly) (interchain with G-Cter in SUMO2) cross-link involves residue Lys-254. The span at 328-338 (AVKVKHVKRRE) shows a compositional bias: basic residues. Positions 339–349 (KKSEKKKEERY) are enriched in basic and acidic residues. A compositionally biased stretch (basic residues) spans 350-362 (KRHRQKQKHKDKW). The segment covering 363-372 (KHPERADAKD) has biased composition (basic and acidic residues). Residues 426-479 (AEEHGKKLLERIRREQQSARTRLQEMERRFHELEAIILRAKQQAVREDEENNEN) adopt a coiled-coil conformation.

As to quaternary structure, component of the SET1 complex, at least composed of the catalytic subunit (SETD1A or SETD1B), WDR5, WDR82, RBBP5, ASH2L/ASH2, CXXC1/CFP1, HCFC1 and DPY30. Interacts with SETD1A. Interacts with ZNF335. Interacts with PRDM9; this interaction does not link PRDM9-activated recombination hotspot sites with DSB machinery and is not required for the hotspot recognition pathway. Interacts with histone H3K4me3. Expressed in seminiferous tubules and in both germ cells and Sertoli cells. Highly expressed in spermatogonia, weakly expressed in leptonema and zygonema, and then again high expression in pachynema and diplonema, decreasing to undetectable levels in spermatids.

The protein localises to the nucleus speckle. It is found in the nucleus. In terms of biological role, transcriptional activator that exhibits a unique DNA binding specificity for CpG unmethylated motifs with a preference for CpGG. The protein is CXXC-type zinc finger protein 1 (Cxxc1) of Mus musculus (Mouse).